Consider the following 143-residue polypeptide: MLSFILIQNRQGKTRLAKWYAPFSDEQKIKLKGEVHRLVAPRDQKYQSNFVEFRNNKIVYRRYAGLFFCACVDTNDNELAFLEAIHFFVEVLDAFFGNVCELDLVFNFYKVYAILDEVFLAGEIEETSKQVVLTRLEHLDKLE.

It belongs to the adaptor complexes small subunit family. In terms of assembly, adaptor protein complex 2 (AP-2) is a heterotetramer composed of two large adaptins (alpha-type subunit APL3 and beta-type subunit APL1), a medium chain (mu-type subunit APM4) and a small adaptin (sigma-type subunit APS2).

Its subcellular location is the cell membrane. It localises to the membrane. The protein resides in the coated pit. Its function is as follows. Component of the adaptor complexes which link clathrin to receptors in coated vesicles. Clathrin-associated protein complexes are believed to interact with the cytoplasmic tails of membrane proteins, leading to their selection and concentration. The chain is AP-2 complex subunit sigma (APS2) from Gibberella zeae (strain ATCC MYA-4620 / CBS 123657 / FGSC 9075 / NRRL 31084 / PH-1) (Wheat head blight fungus).